Consider the following 386-residue polypeptide: Succinate--CoA ligase [ADP-forming] subunit beta (386 aa).

The ATP-grasp domain maps to 9–244; that stretch reads KEVLRKYGVA…LDEEDPKEIE (236 aa). ATP is bound by residues K46, 53-55, E99, C102, and E107; that span reads GRG. Residues N199 and D213 each coordinate Mg(2+). Residues N264 and 321–323 each bind substrate; that span reads GIM.

This sequence belongs to the succinate/malate CoA ligase beta subunit family. As to quaternary structure, heterotetramer of two alpha and two beta subunits. The cofactor is Mg(2+).

The catalysed reaction is succinate + ATP + CoA = succinyl-CoA + ADP + phosphate. The enzyme catalyses GTP + succinate + CoA = succinyl-CoA + GDP + phosphate. The protein operates within carbohydrate metabolism; tricarboxylic acid cycle; succinate from succinyl-CoA (ligase route): step 1/1. Functionally, succinyl-CoA synthetase functions in the citric acid cycle (TCA), coupling the hydrolysis of succinyl-CoA to the synthesis of either ATP or GTP and thus represents the only step of substrate-level phosphorylation in the TCA. The beta subunit provides nucleotide specificity of the enzyme and binds the substrate succinate, while the binding sites for coenzyme A and phosphate are found in the alpha subunit. The polypeptide is Succinate--CoA ligase [ADP-forming] subunit beta (Bacillus licheniformis (strain ATCC 14580 / DSM 13 / JCM 2505 / CCUG 7422 / NBRC 12200 / NCIMB 9375 / NCTC 10341 / NRRL NRS-1264 / Gibson 46)).